The chain runs to 267 residues: Mediator of RNA polymerase II transcription subunit 8 (267 aa).

Coiled-coil stretches lie at residues 1–26 and 116–160; these read MQRE…KNSL and DVEE…EERE. The tract at residues 190–267 is disordered; the sequence is GLSNRRPPGQ…KSASMHPYQR (78 aa). Positions 227–245 are enriched in polar residues; that stretch reads PPNQQQQHMAGVSMSQGSQ.

The protein belongs to the Mediator complex subunit 8 family. Component of the Mediator complex. May be part of a multisubunit E3 ubiquitin-protein ligase complex.

It is found in the nucleus. It functions in the pathway protein modification; protein ubiquitination. Functionally, component of the Mediator complex, a coactivator involved in the regulated transcription of nearly all RNA polymerase II-dependent genes. Mediator functions as a bridge to convey information from gene-specific regulatory proteins to the basal RNA polymerase II transcription machinery. Mediator is recruited to promoters by direct interactions with regulatory proteins and serves as a scaffold for the assembly of a functional preinitiation complex with RNA polymerase II and the general transcription factors. May play a role as a target recruitment subunit in E3 ubiquitin-protein ligase complexes and thus in ubiquitination and subsequent proteasomal degradation of target proteins. This Xenopus tropicalis (Western clawed frog) protein is Mediator of RNA polymerase II transcription subunit 8 (med8).